A 1241-amino-acid chain; its full sequence is DNA-directed RNA polymerase subunit beta (1241 aa).

The segment at 1186–1210 (EDEIVPTAEKRSSNQDEEALELVDN) is disordered. Residues 1200 to 1210 (QDEEALELVDN) show a composition bias toward acidic residues.

This sequence belongs to the RNA polymerase beta chain family. As to quaternary structure, the RNAP catalytic core consists of 2 alpha, 1 beta, 1 beta' and 1 omega subunit. When a sigma factor is associated with the core the holoenzyme is formed, which can initiate transcription.

The catalysed reaction is RNA(n) + a ribonucleoside 5'-triphosphate = RNA(n+1) + diphosphate. Functionally, DNA-dependent RNA polymerase catalyzes the transcription of DNA into RNA using the four ribonucleoside triphosphates as substrates. This Clostridium novyi (strain NT) protein is DNA-directed RNA polymerase subunit beta.